Consider the following 175-residue polypeptide: Pituitary adenylate cyclase-activating polypeptide (175 aa).

Positions 1 to 24 (MTMCSGARLALLVYGIIMHNSVSC) are cleaved as a signal peptide. Positions 25-78 (SPAAGLSFPGIRPEEEAYDQDGNPLQDFYDWDPPGAGSPASALRDAYALYYPAD) are excised as a propeptide. Positions 149–157 (VKKYLAAVL) are important for receptor binding. Leu157 bears the Leucine amide mark. Lys168 carries the post-translational modification Lysine amide. The propeptide occupies 172-175 (IAYL).

This sequence belongs to the glucagon family.

The protein localises to the secreted. PACAP is a neuropeptide involved in diverse array of physiological processes through activating the PACAP subfamily of class B1 G protein-coupled receptors: VIP receptor 1 (VIPR1), VIP receptor 2 (VIPR2), and PACAP type I receptor (ADCYAP1R1). Exerts neuroprotective and general cytoprotective effects due to anti-apoptotic, anti-inflammatory, and antioxidant actions. Promotes neuron projection development through the RAPGEF2/Rap1/B-Raf/ERK pathway. In chromaffin cells, induces long-lasting increase of intracellular calcium concentrations and neuroendocrine secretion. Involved in the control of glucose homeostasis, induces insulin secretion by pancreatic beta cells. PACAP exists in two bioactive forms from proteolysis of the same precursor protein, PACAP27 and PACAP38, which differ by eleven amino acid residues in the C-terminus. The polypeptide is Pituitary adenylate cyclase-activating polypeptide (Adcyap1) (Rattus norvegicus (Rat)).